Here is a 312-residue protein sequence, read N- to C-terminus: Glyoxylate/hydroxypyruvate reductase A (312 aa).

The active site involves Arg227. His275 functions as the Proton donor in the catalytic mechanism.

Belongs to the D-isomer specific 2-hydroxyacid dehydrogenase family. GhrA subfamily.

It is found in the cytoplasm. It catalyses the reaction glycolate + NADP(+) = glyoxylate + NADPH + H(+). The enzyme catalyses (R)-glycerate + NAD(+) = 3-hydroxypyruvate + NADH + H(+). It carries out the reaction (R)-glycerate + NADP(+) = 3-hydroxypyruvate + NADPH + H(+). Catalyzes the NADPH-dependent reduction of glyoxylate and hydroxypyruvate into glycolate and glycerate, respectively. This Escherichia coli O17:K52:H18 (strain UMN026 / ExPEC) protein is Glyoxylate/hydroxypyruvate reductase A.